The sequence spans 342 residues: MENILDFTLEELKEWLISKEEKAFRAKQVFDWIYNKLIFDFNNMKNIPYKTKNLLSDNFYIGVPKVVKKLMSQDKNTYKFLFEYKDGNIIESVVMKYKHGNSICVSTQVGCRMGCKFCASTLDGVIRNLTSGEILSQIMAAQKEIGERISNVVLMGSGEPLDNFENVTKFLDLVTSDTTLNIGQRHITLSTCGIVPKIKELADKNYNITLAISLHSPEDLLRKEMMPIANKYSIKELMEACDYYINKTNRRITFEYALVKGKNDSIKEAKKLSTVLKGKLCHVNLIPVNEIKENSYEKSTLKNIESFGNILKENGIETTIRREMGADINAACGQLRRSYVSK.

Glu-91 acts as the Proton acceptor in catalysis. The Radical SAM core domain maps to 97–327 (YKHGNSICVS…TTIRREMGAD (231 aa)). Residues Cys-104 and Cys-332 are joined by a disulfide bond. [4Fe-4S] cluster is bound by residues Cys-111, Cys-115, and Cys-118. S-adenosyl-L-methionine contacts are provided by residues 158-159 (GE), Ser-190, 213-215 (SLH), and Asn-289. Cys-332 acts as the S-methylcysteine intermediate in catalysis.

This sequence belongs to the radical SAM superfamily. RlmN family. Requires [4Fe-4S] cluster as cofactor.

The protein localises to the cytoplasm. It carries out the reaction adenosine(2503) in 23S rRNA + 2 reduced [2Fe-2S]-[ferredoxin] + 2 S-adenosyl-L-methionine = 2-methyladenosine(2503) in 23S rRNA + 5'-deoxyadenosine + L-methionine + 2 oxidized [2Fe-2S]-[ferredoxin] + S-adenosyl-L-homocysteine. It catalyses the reaction adenosine(37) in tRNA + 2 reduced [2Fe-2S]-[ferredoxin] + 2 S-adenosyl-L-methionine = 2-methyladenosine(37) in tRNA + 5'-deoxyadenosine + L-methionine + 2 oxidized [2Fe-2S]-[ferredoxin] + S-adenosyl-L-homocysteine. In terms of biological role, specifically methylates position 2 of adenine 2503 in 23S rRNA and position 2 of adenine 37 in tRNAs. The chain is Probable dual-specificity RNA methyltransferase RlmN from Clostridium botulinum (strain Okra / Type B1).